A 327-amino-acid polypeptide reads, in one-letter code: Mitochondrial substrate carrier family protein A (327 aa).

A disordered region spans residues 1 to 36; that stretch reads MVINNQNNNNQNNNQNNNNKNDNLNNSTTTTTTTAT. Residues 1–48 lie on the Mitochondrial intermembrane side of the membrane; the sequence is MVINNQNNNNQNNNQNNNNKNDNLNNSTTTTTTTATTTKSSTLFHSND. Solcar repeat units lie at residues 43-132, 140-224, and 233-323; these read LFHS…FKRM, ISVI…IKEK, and PPLY…AITL. A helical membrane pass occupies residues 49 to 66; the sequence is FFSGLIAGIVSRTLTAPL. Over 67-106 the chain is Mitochondrial matrix; the sequence is ERIKILNQVEVILKDGTKYNRIIPAFKVIIKEEGIAGLFR. Residues 107–127 traverse the membrane as a helical segment; that stretch reads GNFVNIIKAGPQSAIRFYSYG. Topologically, residues 128–145 are mitochondrial intermembrane; it reads AFKRMASEPDGSISVINR. The helical transmembrane segment at 146–166 threads the bilayer; the sequence is MWAGASSGVVSVALTHPLDVI. Residues 167–192 lie on the Mitochondrial matrix side of the membrane; it reads KTHITVIAPTAATIKNVTKGIYRDLG. A helical transmembrane segment spans residues 193 to 213; sequence IIGFFRGLSAGILNIAPFAAL. At 214–238 the chain is on the mitochondrial intermembrane side; that stretch reads NFTFYETIKEKTQQYILKSPPLYAP. The helical transmembrane segment at 239-259 threads the bilayer; the sequence is SIYGAISGGLTMTILYPLDVV. Topologically, residues 260 to 303 are mitochondrial matrix; sequence KRRIMLQHFDRNQLPIYKNFIDAIIKITKTEGISALYKGIRPAY. A helical transmembrane segment spans residues 304–324; it reads LKVIPTVSINFLIYEGAITLF. Over 325–327 the chain is Mitochondrial intermembrane; the sequence is EKK.

It belongs to the mitochondrial carrier (TC 2.A.29) family.

The protein resides in the mitochondrion inner membrane. Its function is as follows. Calcium-dependent mitochondrial solute carrier. Mitochondrial solute carriers shuttle metabolites, nucleotides, and cofactors through the mitochondrial inner membrane. This chain is Mitochondrial substrate carrier family protein A (mcfA), found in Dictyostelium discoideum (Social amoeba).